The primary structure comprises 210 residues: UPF0637 protein RBAM_014510 (210 aa).

It belongs to the UPF0637 family.

This is UPF0637 protein RBAM_014510 from Bacillus velezensis (strain DSM 23117 / BGSC 10A6 / LMG 26770 / FZB42) (Bacillus amyloliquefaciens subsp. plantarum).